Consider the following 343-residue polypeptide: 3-dehydroquinate synthase (343 aa).

NAD(+) is bound by residues 61–66 (SGEKYK), 95–99 (GVISD), 119–120 (TT), Lys132, Lys141, and 159–162 (FLKT). The Zn(2+) site is built by Glu174, His231, and His248.

This sequence belongs to the sugar phosphate cyclases superfamily. Dehydroquinate synthase family. Co(2+) serves as cofactor. The cofactor is Zn(2+). NAD(+) is required as a cofactor.

The protein resides in the cytoplasm. The catalysed reaction is 7-phospho-2-dehydro-3-deoxy-D-arabino-heptonate = 3-dehydroquinate + phosphate. It functions in the pathway metabolic intermediate biosynthesis; chorismate biosynthesis; chorismate from D-erythrose 4-phosphate and phosphoenolpyruvate: step 2/7. Its function is as follows. Catalyzes the conversion of 3-deoxy-D-arabino-heptulosonate 7-phosphate (DAHP) to dehydroquinate (DHQ). The chain is 3-dehydroquinate synthase from Helicobacter pylori (strain G27).